We begin with the raw amino-acid sequence, 234 residues long: Interleukin-34 (234 aa).

The first 20 residues, 1-20, serve as a signal peptide directing secretion; that stretch reads MPQGLAWLRYLGILLGMALG. A glycan (N-linked (GlcNAc...) asparagine) is linked at Asn-76. A disordered region spans residues 191 to 234; the sequence is EAPQPQPRSPASAQCEAAQLYPLPQPPSTSLPRVLGPSAGPPTQ.

This sequence belongs to the IL-34 family. As to quaternary structure, homodimer. Interacts with CSF1R.

Its subcellular location is the secreted. Its function is as follows. Cytokine that promotes the proliferation, survival and differentiation of monocytes and macrophages. Promotes the release of pro-inflammatory chemokines, and thereby plays an important role in innate immunity and in inflammatory processes. Plays an important role in the regulation of osteoclast proliferation and differentiation, and in the regulation of bone resorption. Signaling via CSF1R and its downstream effectors stimulates phosphorylation of MAPK1/ERK2 AND MAPK3/ERK1. The chain is Interleukin-34 from Bos taurus (Bovine).